The following is a 413-amino-acid chain: Putative F-box protein At3g17560 (413 aa).

An F-box domain is found at 9–55 (TKLLFDLPQDVIEEIFSKVPVTCLRRIRSTCKRLYALLKDRGFIRKH).

This chain is Putative F-box protein At3g17560, found in Arabidopsis thaliana (Mouse-ear cress).